The primary structure comprises 218 residues: Mitochondrial fission factor (218 aa).

The Cytoplasmic segment spans residues 1–198; it reads MAEISRIQYE…ENKERAKREM (198 aa). Residue Thr-89 is modified to Phosphothreonine. 4 positions are modified to phosphoserine: Ser-129, Ser-131, Ser-146, and Ser-171. The stretch at 167–198 forms a coiled coil; that stretch reads VDAASLRRQIIKLNRRLQLLEEENKERAKREM. The chain crosses the membrane as a helical; Anchor for type IV membrane protein span at residues 199-216; it reads VMYSITVAFWLLNSWLWF. Residues 217 to 218 are Mitochondrial intermembrane-facing; the sequence is RR.

This sequence belongs to the Tango11 family. Homodimer. Interacts with DNM1L. Interacts with C11orf65/MFI; the interaction inhibits MFF interaction with DNM1L.

The protein localises to the mitochondrion outer membrane. The protein resides in the peroxisome. It localises to the cytoplasmic vesicle. Its subcellular location is the secretory vesicle. It is found in the synaptic vesicle. Its function is as follows. Plays a role in mitochondrial and peroxisomal fission. Promotes the recruitment and association of the fission mediator dynamin-related protein 1 (DNM1L) to the mitochondrial surface. May be involved in regulation of synaptic vesicle membrane dynamics by recruitment of DNM1L to clathrin-containing vesicles. This is Mitochondrial fission factor (Mff) from Rattus norvegicus (Rat).